We begin with the raw amino-acid sequence, 226 residues long: UPF0173 metal-dependent hydrolase SRU_1937 (226 aa).

Belongs to the UPF0173 family.

The protein is UPF0173 metal-dependent hydrolase SRU_1937 of Salinibacter ruber (strain DSM 13855 / M31).